A 315-amino-acid chain; its full sequence is Glycine--tRNA ligase alpha subunit (315 aa).

Belongs to the class-II aminoacyl-tRNA synthetase family. In terms of assembly, tetramer of two alpha and two beta subunits.

It is found in the cytoplasm. The enzyme catalyses tRNA(Gly) + glycine + ATP = glycyl-tRNA(Gly) + AMP + diphosphate. This Pseudomonas entomophila (strain L48) protein is Glycine--tRNA ligase alpha subunit.